The sequence spans 179 residues: Large ribosomal subunit protein uL5 (179 aa).

The protein belongs to the universal ribosomal protein uL5 family. As to quaternary structure, part of the 50S ribosomal subunit; part of the 5S rRNA/L5/L18/L25 subcomplex. Contacts the 5S rRNA and the P site tRNA. Forms a bridge to the 30S subunit in the 70S ribosome.

In terms of biological role, this is one of the proteins that bind and probably mediate the attachment of the 5S RNA into the large ribosomal subunit, where it forms part of the central protuberance. In the 70S ribosome it contacts protein S13 of the 30S subunit (bridge B1b), connecting the 2 subunits; this bridge is implicated in subunit movement. Contacts the P site tRNA; the 5S rRNA and some of its associated proteins might help stabilize positioning of ribosome-bound tRNAs. The chain is Large ribosomal subunit protein uL5 from Azotobacter vinelandii (strain DJ / ATCC BAA-1303).